Consider the following 589-residue polypeptide: Protein NRT1/ PTR FAMILY 4.7 (589 aa).

The next 12 helical transmembrane spans lie at 59–79, 105–125, 127–147, 160–180, 201–221, 230–250, 344–364, 383–403, 429–449, 471–491, 520–540, and 560–580; these read GMLAASFVLVVEVLENLAFLA, AFMGTAFFLALLGGFLADAFF, TFHIYLVSAAIEFLGLMVLTV, VFLFVGLYLVALGVGGIKGSL, FFFNYFIFSLSCGALIAVTVV, WSYGFGVSTAAILISVPVFLA, IVIKILPIFMSTIMLNCCLAQ, FTVPPAALPVFPVVFMMILAP, IGTGLVLSIVAMAVAALVETK, LPITFLWVAIQYVFLGSADLF, LAMGYYFSSVLVSAVNFVTGL, and FYWLMCVLSGINFLHYLFWAS.

It belongs to the major facilitator superfamily. Proton-dependent oligopeptide transporter (POT/PTR) (TC 2.A.17) family. Expressed in flowers.

It is found in the membrane. The sequence is that of Protein NRT1/ PTR FAMILY 4.7 (NPF4.7) from Arabidopsis thaliana (Mouse-ear cress).